The sequence spans 246 residues: tRNA (guanine-N(1)-)-methyltransferase (246 aa).

S-adenosyl-L-methionine is bound by residues glycine 113 and 133–138; that span reads IGDYVL.

This sequence belongs to the RNA methyltransferase TrmD family. As to quaternary structure, homodimer.

The protein localises to the cytoplasm. It catalyses the reaction guanosine(37) in tRNA + S-adenosyl-L-methionine = N(1)-methylguanosine(37) in tRNA + S-adenosyl-L-homocysteine + H(+). Specifically methylates guanosine-37 in various tRNAs. The polypeptide is tRNA (guanine-N(1)-)-methyltransferase (Haemophilus influenzae (strain 86-028NP)).